Here is a 107-residue protein sequence, read N- to C-terminus: CLAVATA3/ESR (CLE)-related protein 10 (107 aa).

The N-terminal stretch at 1 to 23 is a signal peptide; sequence MKTNRNRPINILIVFFLLTTARA. Residues asparagine 27 and asparagine 30 are each glycosylated (N-linked (GlcNAc...) asparagine). A disordered region spans residues 73–107; the sequence is SRQPLFSPPPPPTEIDQRYGVEKRLVPSGPNPLHN. Over residues 87-97 the composition is skewed to basic and acidic residues; sequence IDQRYGVEKRL. Hydroxyproline is present on residues proline 99 and proline 102. An O-linked (Ara...) hydroxyproline glycan is attached at proline 102.

It belongs to the CLV3/ESR signal peptide family. In terms of processing, the O-glycosylation (arabinosylation) of the hydroxyproline Pro-102 enhances binding affinity of the CLE10p peptide for its receptor. In terms of tissue distribution, expressed in stems, apex, leaves, flowers, siliques and pollen.

The protein localises to the secreted. It is found in the extracellular space. Its function is as follows. Extracellular signal peptide that regulates cell fate. Represses root apical meristem maintenance. Regulates the transition of protophloem cells from proliferation to differentiation, thus impinging on postembryonic growth capacity of the root meristem; this signaling pathway requires CRN and CLV2. The polypeptide is CLAVATA3/ESR (CLE)-related protein 10 (Arabidopsis thaliana (Mouse-ear cress)).